A 145-amino-acid chain; its full sequence is Transcription antitermination protein NusB (145 aa).

The protein belongs to the NusB family.

In terms of biological role, involved in transcription antitermination. Required for transcription of ribosomal RNA (rRNA) genes. Binds specifically to the boxA antiterminator sequence of the ribosomal RNA (rrn) operons. The polypeptide is Transcription antitermination protein NusB (Paraburkholderia phymatum (strain DSM 17167 / CIP 108236 / LMG 21445 / STM815) (Burkholderia phymatum)).